The chain runs to 332 residues: 2,3-diketo-L-gulonate reductase (332 aa).

His-44 serves as the catalytic Proton donor. NAD(+) is bound by residues 168–174 (ITMVDMS), 224–225 (WK), and 304–306 (GHE).

It belongs to the LDH2/MDH2 oxidoreductase family. DlgD subfamily. Homodimer.

The protein resides in the cytoplasm. The enzyme catalyses 3-dehydro-L-gulonate + NAD(+) = 2,3-dioxo-L-gulonate + NADH + H(+). The catalysed reaction is 3-dehydro-L-gulonate + NADP(+) = 2,3-dioxo-L-gulonate + NADPH + H(+). In terms of biological role, catalyzes the reduction of 2,3-diketo-L-gulonate in the presence of NADH, to form 3-keto-L-gulonate. The sequence is that of 2,3-diketo-L-gulonate reductase from Salmonella typhi.